Reading from the N-terminus, the 516-residue chain is Protein P54 (516 aa).

Positions 1–27 (MKKSLLSAVMLSSIALTAVGSPIAAAA) are cleaved as a signal peptide. Residues 208-397 (ATAEDKKADL…PAPAPAPNPS (190 aa)) are disordered. The span at 210 to 236 (AEDKKADLNRKKAEAEAEQARIREQAR) shows a compositional bias: basic and acidic residues. Low complexity-rich tracts occupy residues 237–247 (LAEQARQQAAQ) and 257–380 (QAAA…TVTP). Pro residues predominate over residues 381–395 (APTPTPTPAPAPAPN). Residues 399-516 (SVNGAAIVAE…WYTPDFAVSM (118 aa)) form the NlpC/P60 domain. The Nucleophile role is filled by Cys-429. His-480 functions as the Proton acceptor in the catalytic mechanism. His-492 is a catalytic residue.

The protein belongs to the peptidase C40 family.

It localises to the secreted. The protein localises to the cell wall. The polypeptide is Protein P54 (Enterococcus faecium (Streptococcus faecium)).